The primary structure comprises 216 residues: 3-keto-L-gulonate-6-phosphate decarboxylase UlaD (216 aa).

Position 11 (Asp-11) interacts with substrate. Residues Glu-33 and Asp-62 each coordinate Mg(2+). Arg-192 contacts substrate.

The protein belongs to the HPS/KGPDC family. KGPDC subfamily. As to quaternary structure, homodimer. Mg(2+) serves as cofactor.

The enzyme catalyses 3-dehydro-L-gulonate 6-phosphate + H(+) = L-xylulose 5-phosphate + CO2. It participates in cofactor degradation; L-ascorbate degradation; D-xylulose 5-phosphate from L-ascorbate: step 2/4. In terms of biological role, catalyzes the decarboxylation of 3-keto-L-gulonate-6-P into L-xylulose-5-P. Is involved in the anaerobic L-ascorbate utilization. This chain is 3-keto-L-gulonate-6-phosphate decarboxylase UlaD, found in Escherichia fergusonii (strain ATCC 35469 / DSM 13698 / CCUG 18766 / IAM 14443 / JCM 21226 / LMG 7866 / NBRC 102419 / NCTC 12128 / CDC 0568-73).